The sequence spans 120 residues: Large ribosomal subunit protein uL18 (120 aa).

Residues 1-10 are compositionally biased toward basic and acidic residues; it reads MKLTRRESKE. Residues 1-26 are disordered; that stretch reads MKLTRRESKERRHRRVRGKVQGSPER.

This sequence belongs to the universal ribosomal protein uL18 family. Part of the 50S ribosomal subunit; part of the 5S rRNA/L5/L18/L25 subcomplex. Contacts the 5S and 23S rRNAs.

This is one of the proteins that bind and probably mediate the attachment of the 5S RNA into the large ribosomal subunit, where it forms part of the central protuberance. The polypeptide is Large ribosomal subunit protein uL18 (Nostoc sp. (strain PCC 7120 / SAG 25.82 / UTEX 2576)).